Consider the following 166-residue polypeptide: MTKAIFPGSFDPITNGHAEVVEAAARMFEKLYVVIMTNTSKKYLFDEKERLDLAKKVFENDKNIEVIARPAELTVEVAHELNAGAIVRGLRNTTDFNYERDIAGINKTLDPKLNTVLLFTRPEDSFISSSMIKETVFFGGNVSTLVPKPVAAALEEKLRNQNNEEK.

Residue Ser9 coordinates substrate. ATP-binding positions include 9–10 (SF) and His17. Residues Lys41, Thr74, and Arg88 each coordinate substrate. Residues 89–91 (GLR), Glu99, and 124–130 (DSFISSS) contribute to the ATP site.

The protein belongs to the bacterial CoaD family. As to quaternary structure, homohexamer. Mg(2+) is required as a cofactor.

The protein resides in the cytoplasm. It catalyses the reaction (R)-4'-phosphopantetheine + ATP + H(+) = 3'-dephospho-CoA + diphosphate. Its pathway is cofactor biosynthesis; coenzyme A biosynthesis; CoA from (R)-pantothenate: step 4/5. In terms of biological role, reversibly transfers an adenylyl group from ATP to 4'-phosphopantetheine, yielding dephospho-CoA (dPCoA) and pyrophosphate. This is Phosphopantetheine adenylyltransferase from Lactobacillus gasseri (strain ATCC 33323 / DSM 20243 / BCRC 14619 / CIP 102991 / JCM 1131 / KCTC 3163 / NCIMB 11718 / NCTC 13722 / AM63).